Consider the following 177-residue polypeptide: MSRIAKAPISVPAGVEVTLKGQEITVKGKNGELTRTINNAVEVKVEENVITTLPREGVTDAWAQAGTARALINNMIVGTHEGYEKKLQLVGVGYRAAAKGKTLDLTLGFSHPVHFAVPEGITIETPSQTEVLVKGVDKQLVGQTAANIRAYRKPEPYKGKGVRYSDENVRRKEAKKK.

Over residues 157–171 (YKGKGVRYSDENVRR) the composition is skewed to basic and acidic residues. Positions 157–177 (YKGKGVRYSDENVRRKEAKKK) are disordered.

This sequence belongs to the universal ribosomal protein uL6 family. In terms of assembly, part of the 50S ribosomal subunit.

Functionally, this protein binds to the 23S rRNA, and is important in its secondary structure. It is located near the subunit interface in the base of the L7/L12 stalk, and near the tRNA binding site of the peptidyltransferase center. The sequence is that of Large ribosomal subunit protein uL6 from Pseudoalteromonas translucida (strain TAC 125).